A 315-amino-acid chain; its full sequence is Calumenin-A (315 aa).

The N-terminal stretch at 1 to 19 (MEIRPLLMCFALCVVYATS) is a signal peptide. EF-hand domains lie at 68 to 103 (ESKN…AQKK), 104 to 139 (YIYD…TYLD), 151 to 186 (QMMA…EEYE), 188 to 223 (MKDI…HEDE), 229 to 264 (WVAT…ADYD), and 265 to 300 (HAEA…FVGS). Residues Asp81, Asp83, Asp85, Glu92, Asp117, Asn119, Asp121, Met123, and Glu128 each contribute to the Ca(2+) site. Residue Asn131 is glycosylated (N-linked (GlcNAc...) asparagine). Asp164, Asn166, Asp168, Glu175, Asp201, Asn203, Asp205, Glu212, Asp242, Asn244, Asp246, Lys248, Glu253, Asp278, Asn280, Asp282, Lys284, and Glu289 together coordinate Ca(2+). A Prevents secretion from ER motif is present at residues 312 to 315 (HDEF).

The protein belongs to the CREC family. Interacts with ggcx.

The protein resides in the endoplasmic reticulum membrane. The protein localises to the golgi apparatus. Its subcellular location is the secreted. It localises to the melanosome. It is found in the sarcoplasmic reticulum lumen. Its function is as follows. Involved in regulation of vitamin K-dependent carboxylation of multiple N-terminal glutamate residues. Seems to inhibit gamma-carboxylase ggcx. Binds 7 calcium ions with a low affinity. This chain is Calumenin-A (calua), found in Danio rerio (Zebrafish).